Here is a 287-residue protein sequence, read N- to C-terminus: Bifunctional protein FolD (287 aa).

NADP(+)-binding positions include 168-170 (GRS), S193, and I234.

It belongs to the tetrahydrofolate dehydrogenase/cyclohydrolase family. As to quaternary structure, homodimer.

It catalyses the reaction (6R)-5,10-methylene-5,6,7,8-tetrahydrofolate + NADP(+) = (6R)-5,10-methenyltetrahydrofolate + NADPH. The catalysed reaction is (6R)-5,10-methenyltetrahydrofolate + H2O = (6R)-10-formyltetrahydrofolate + H(+). The protein operates within one-carbon metabolism; tetrahydrofolate interconversion. In terms of biological role, catalyzes the oxidation of 5,10-methylenetetrahydrofolate to 5,10-methenyltetrahydrofolate and then the hydrolysis of 5,10-methenyltetrahydrofolate to 10-formyltetrahydrofolate. The sequence is that of Bifunctional protein FolD from Clostridioides difficile (strain 630) (Peptoclostridium difficile).